Consider the following 210-residue polypeptide: Probable GTP-binding protein EngB (210 aa).

The region spanning 25–199 (CGIEVAFAGR…RQKLDSWFSE (175 aa)) is the EngB-type G domain. GTP is bound by residues 33–40 (GRSNAGKS), 60–64 (GRTQL), 78–81 (DLPG), 145–148 (TKAD), and 178–180 (FSS). Residues Ser-40 and Thr-62 each contribute to the Mg(2+) site.

Belongs to the TRAFAC class TrmE-Era-EngA-EngB-Septin-like GTPase superfamily. EngB GTPase family. Mg(2+) serves as cofactor.

Functionally, necessary for normal cell division and for the maintenance of normal septation. The polypeptide is Probable GTP-binding protein EngB (Salmonella paratyphi C (strain RKS4594)).